Reading from the N-terminus, the 227-residue chain is uncharacterized protein (227 aa).

Positions 52 to 100 (NKRAKLYRERNKAKLKEKQHKWYHKGGGKEHKKLYDKINLEKSNMRDKN) form a coiled coil.

The protein belongs to the mimivirus L246/L426 family.

This is an uncharacterized protein from Acanthamoeba polyphaga mimivirus (APMV).